We begin with the raw amino-acid sequence, 92 residues long: Probable acyl carrier protein (92 aa).

A Carrier domain is found at 11–92 (QVTFEELSAL…QVNATLRTAV (82 aa)). Position 49 is an O-(pantetheine 4'-phosphoryl)serine (serine 49).

In terms of processing, 4'-phosphopantetheine is transferred from CoA to a specific serine of the apo-ACP-like protein.

Involved in developmentally regulated synthesis of a compound biosynthetically related to polyketide antibiotics which is essential for spore color in Streptomyces halstedii. In Streptomyces halstedii, this protein is Probable acyl carrier protein (sch3).